Reading from the N-terminus, the 73-residue chain is Translation initiation factor IF-1 (73 aa).

The S1-like domain occupies 1 to 73 (MAKKEDTIVL…TKARVVYRHR (73 aa)).

Belongs to the IF-1 family. As to quaternary structure, component of the 30S ribosomal translation pre-initiation complex which assembles on the 30S ribosome in the order IF-2 and IF-3, IF-1 and N-formylmethionyl-tRNA(fMet); mRNA recruitment can occur at any time during PIC assembly.

The protein localises to the cytoplasm. One of the essential components for the initiation of protein synthesis. Stabilizes the binding of IF-2 and IF-3 on the 30S subunit to which N-formylmethionyl-tRNA(fMet) subsequently binds. Helps modulate mRNA selection, yielding the 30S pre-initiation complex (PIC). Upon addition of the 50S ribosomal subunit IF-1, IF-2 and IF-3 are released leaving the mature 70S translation initiation complex. In Chlamydia muridarum (strain MoPn / Nigg), this protein is Translation initiation factor IF-1.